Consider the following 448-residue polypeptide: ATP-dependent protease ATPase subunit HslU (448 aa).

Residues I23, 65–70, D263, E327, and R399 each bind ATP; that span reads GIGKTE.

It belongs to the ClpX chaperone family. HslU subfamily. A double ring-shaped homohexamer of HslV is capped on each side by a ring-shaped HslU homohexamer. The assembly of the HslU/HslV complex is dependent on binding of ATP.

The protein localises to the cytoplasm. Functionally, ATPase subunit of a proteasome-like degradation complex; this subunit has chaperone activity. The binding of ATP and its subsequent hydrolysis by HslU are essential for unfolding of protein substrates subsequently hydrolyzed by HslV. HslU recognizes the N-terminal part of its protein substrates and unfolds these before they are guided to HslV for hydrolysis. The protein is ATP-dependent protease ATPase subunit HslU of Borreliella burgdorferi (strain ATCC 35210 / DSM 4680 / CIP 102532 / B31) (Borrelia burgdorferi).